A 239-amino-acid chain; its full sequence is Ribosomal RNA small subunit methyltransferase G (239 aa).

Residues glycine 77, phenylalanine 82, 128 to 129 (AE), and arginine 147 contribute to the S-adenosyl-L-methionine site. The interval 215–239 (IRKTKSTPKKYPRKPGTPNKSPIEG) is disordered. Over residues 216-227 (RKTKSTPKKYPR) the composition is skewed to basic residues.

It belongs to the methyltransferase superfamily. RNA methyltransferase RsmG family.

The protein localises to the cytoplasm. In terms of biological role, specifically methylates the N7 position of guanine in position 535 of 16S rRNA. The sequence is that of Ribosomal RNA small subunit methyltransferase G from Bacillus velezensis (strain DSM 23117 / BGSC 10A6 / LMG 26770 / FZB42) (Bacillus amyloliquefaciens subsp. plantarum).